A 311-amino-acid chain; its full sequence is Transcription factor BIM2 (311 aa).

Disordered stretches follow at residues 1–60 (MRTG…RRSK) and 271–311 (ANQG…MKTL). Composition is skewed to basic and acidic residues over residues 33–44 (SNRDSKENDKAS) and 51–60 (SVTEQRRRSK). Residues 45-95 (AIRSKHSVTEQRRRSKINERFQILRELIPNSEQKRDTASFLLEVIDYVQYL) form the bHLH domain.

Homodimer. Interacts with the N-terminus of BZR2/BES1. As to expression, expressed constitutively in roots, leaves, stems, and flowers.

The protein localises to the nucleus. In terms of biological role, positive brassinosteroid-signaling protein. This Arabidopsis thaliana (Mouse-ear cress) protein is Transcription factor BIM2 (BIM2).